A 417-amino-acid polypeptide reads, in one-letter code: mRNA cap guanine-N(7) methyltransferase (417 aa).

Residues 129-412 (SPIIKLRNFN…LYTVFAFKKV (284 aa)) enclose the mRNA cap 0 methyltransferase domain. Residue 138–139 (NN) participates in mRNA binding. K142, G160, D182, D211, Q237, and Y242 together coordinate S-adenosyl-L-methionine.

This sequence belongs to the class I-like SAM-binding methyltransferase superfamily. mRNA cap 0 methyltransferase family.

The protein resides in the nucleus. It catalyses the reaction a 5'-end (5'-triphosphoguanosine)-ribonucleoside in mRNA + S-adenosyl-L-methionine = a 5'-end (N(7)-methyl 5'-triphosphoguanosine)-ribonucleoside in mRNA + S-adenosyl-L-homocysteine. In terms of biological role, responsible for methylating the 5'-cap structure of mRNAs. This Candida glabrata (strain ATCC 2001 / BCRC 20586 / JCM 3761 / NBRC 0622 / NRRL Y-65 / CBS 138) (Yeast) protein is mRNA cap guanine-N(7) methyltransferase (ABD1).